A 245-amino-acid chain; its full sequence is Flavin-dependent thymidylate synthase (245 aa).

A ThyX domain is found at 5 to 210 (IKVRLVNYTK…ELRPIIRWAK (206 aa)). Residues S59, 83-85 (RHR), and Q91 each bind FAD. DUMP is bound by residues 80 to 83 (QLVR), 91 to 95 (QQSMR), and R149. Positions 83–93 (RHRIASYTQQS) match the ThyX motif motif. FAD-binding positions include 165-167 (NLR) and H171. R176 is a dUMP binding site. R176 acts as the Involved in ionization of N3 of dUMP, leading to its activation in catalysis.

It belongs to the thymidylate synthase ThyX family. As to quaternary structure, homotetramer. FAD serves as cofactor.

It carries out the reaction dUMP + (6R)-5,10-methylene-5,6,7,8-tetrahydrofolate + NADPH + H(+) = dTMP + (6S)-5,6,7,8-tetrahydrofolate + NADP(+). It participates in pyrimidine metabolism; dTTP biosynthesis. Its function is as follows. Catalyzes the reductive methylation of 2'-deoxyuridine-5'-monophosphate (dUMP) to 2'-deoxythymidine-5'-monophosphate (dTMP) while utilizing 5,10-methylenetetrahydrofolate (mTHF) as the methyl donor, and NADPH and FADH(2) as the reductant. The protein is Flavin-dependent thymidylate synthase of Thermococcus onnurineus (strain NA1).